We begin with the raw amino-acid sequence, 188 residues long: dCTP deaminase (188 aa).

Residues 111-116, 135-137, Q156, Y170, K179, and Q180 each bind dCTP; these read KSTYAR and TLE. The Proton donor/acceptor role is filled by E137.

Belongs to the dCTP deaminase family. As to quaternary structure, homotrimer.

The catalysed reaction is dCTP + H2O + H(+) = dUTP + NH4(+). The protein operates within pyrimidine metabolism; dUMP biosynthesis; dUMP from dCTP (dUTP route): step 1/2. Catalyzes the deamination of dCTP to dUTP. This Rickettsia africae (strain ESF-5) protein is dCTP deaminase.